The chain runs to 252 residues: 5'-nucleotidase SurE (252 aa).

A divalent metal cation is bound by residues D8, D9, S40, and N92.

This sequence belongs to the SurE nucleotidase family. The cofactor is a divalent metal cation.

It is found in the cytoplasm. It carries out the reaction a ribonucleoside 5'-phosphate + H2O = a ribonucleoside + phosphate. Its function is as follows. Nucleotidase that shows phosphatase activity on nucleoside 5'-monophosphates. This chain is 5'-nucleotidase SurE, found in Chelativorans sp. (strain BNC1).